The following is a 346-amino-acid chain: Uroporphyrinogen decarboxylase (346 aa).

Substrate is bound by residues 23–27 (RQAGR), Asp72, Tyr149, Thr204, and His318.

This sequence belongs to the uroporphyrinogen decarboxylase family. In terms of assembly, homodimer.

The protein localises to the cytoplasm. The catalysed reaction is uroporphyrinogen III + 4 H(+) = coproporphyrinogen III + 4 CO2. The protein operates within porphyrin-containing compound metabolism; protoporphyrin-IX biosynthesis; coproporphyrinogen-III from 5-aminolevulinate: step 4/4. Its function is as follows. Catalyzes the decarboxylation of four acetate groups of uroporphyrinogen-III to yield coproporphyrinogen-III. This Synechococcus sp. (strain JA-2-3B'a(2-13)) (Cyanobacteria bacterium Yellowstone B-Prime) protein is Uroporphyrinogen decarboxylase.